Reading from the N-terminus, the 481-residue chain is OTU domain-containing protein 1 (481 aa).

2 disordered regions span residues 18–60 and 202–282; these read PTAA…AAAE and LAAA…IVSR. Over residues 38–58 the composition is skewed to low complexity; it reads PPGAAGAAPEPETGECQPAAA. Residues 225-257 are compositionally biased toward basic and acidic residues; it reads GEEHLAERGPRGWERGGDRCDAPGGDAARRPDP. The span at 261–281 shows a compositional bias: low complexity; that stretch reads APPAGSIEAAPSSAAEPVIVS. The OTU domain maps to 309-438; sequence KYRFHIIPDG…NGHYDAVFDH (130 aa). Residues 314-320 are cys-loop; it reads IIPDGNC. The active site involves Asp-317. The Nucleophile role is filled by Cys-320. The interval 369–379 is his-loop; it reads AAQDGAWAGYP. A variable-loop region spans residues 426-431; sequence WLSNGH. His-431 is an active-site residue. Residues 457-476 form the UIM domain; the sequence is KRDEELAKSMAISLSKMYIE.

The catalysed reaction is Thiol-dependent hydrolysis of ester, thioester, amide, peptide and isopeptide bonds formed by the C-terminal Gly of ubiquitin (a 76-residue protein attached to proteins as an intracellular targeting signal).. Deubiquitinating enzyme that specifically hydrolyzes 'Lys-63'-linked polyubiquitin to monoubiquitin. Required for the stability and translation of a subset mRNAs with a high abundance of rare codons by mediating deubiquitination of 40S ribosomal protein RPS10/eS10, thereby antagonizing ZNF598-mediated 40S ubiquitination. The abundance of rare codons in mRNAs can limit the translation rate and can lead to ribosome collisions that trigger activation of ribosome quality control (RQC) pathway by ZNF598. OTUD1-mediated deubiquitination prevents activation of the RQC and subsequent dissociation of ribosomes and stimulates formation of polysomes and translation. This chain is OTU domain-containing protein 1, found in Homo sapiens (Human).